We begin with the raw amino-acid sequence, 86 residues long: YcgL domain-containing protein XOO0428 (86 aa).

The YcgL domain occupies 1-83 (MHAYVYKSQR…PKTRVLAGEC (83 aa)).

This Xanthomonas oryzae pv. oryzae (strain MAFF 311018) protein is YcgL domain-containing protein XOO0428.